The primary structure comprises 259 residues: Steroidogenic acute regulatory-like protein 1 (259 aa).

The signal sequence occupies residues 1-20 (MTLLPFTCLILLYSLGSVMS). In terms of domain architecture, START spans 43-254 (YATALKTCGE…NRRHFQNLKA (212 aa)).

This chain is Steroidogenic acute regulatory-like protein 1 (strl-1), found in Caenorhabditis elegans.